Consider the following 235-residue polypeptide: Caffeoyl-CoA O-methyltransferase (235 aa).

Lysine 8 lines the substrate pocket. S-adenosyl-L-methionine-binding positions include valine 52, glutamate 74, 76–77 (GV), serine 82, aspartate 100, and alanine 129. Aspartate 151 serves as a coordination point for substrate. Aspartate 151 serves as a coordination point for a divalent metal cation. Aspartate 153 is a binding site for S-adenosyl-L-methionine. Aspartate 177 and asparagine 178 together coordinate a divalent metal cation.

Belongs to the class I-like SAM-binding methyltransferase superfamily. Cation-dependent O-methyltransferase family. CCoAMT subfamily. The cofactor is a divalent metal cation.

It carries out the reaction (E)-caffeoyl-CoA + S-adenosyl-L-methionine = (E)-feruloyl-CoA + S-adenosyl-L-homocysteine + H(+). It functions in the pathway aromatic compound metabolism; phenylpropanoid biosynthesis. Methylates caffeoyl-CoA to feruloyl-CoA and 5-hydroxyferuloyl-CoA to sinapoyl-CoA. Plays a role in the synthesis of feruloylated polysaccharides. Involved in the reinforcement of the plant cell wall. Also involved in the responding to wounding or pathogen challenge by the increased formation of cell wall-bound ferulic acid polymers. In Populus kitakamiensis (Aspen), this protein is Caffeoyl-CoA O-methyltransferase.